Here is a 175-residue protein sequence, read N- to C-terminus: Translation initiation factor IF-3 (175 aa).

Belongs to the IF-3 family. As to quaternary structure, monomer.

The protein resides in the cytoplasm. In terms of biological role, IF-3 binds to the 30S ribosomal subunit and shifts the equilibrium between 70S ribosomes and their 50S and 30S subunits in favor of the free subunits, thus enhancing the availability of 30S subunits on which protein synthesis initiation begins. This Chromobacterium violaceum (strain ATCC 12472 / DSM 30191 / JCM 1249 / CCUG 213 / NBRC 12614 / NCIMB 9131 / NCTC 9757 / MK) protein is Translation initiation factor IF-3.